The chain runs to 123 residues: Small ribosomal subunit protein uS12c (123 aa).

The protein belongs to the universal ribosomal protein uS12 family. In terms of assembly, part of the 30S ribosomal subunit.

It is found in the plastid. The protein localises to the chloroplast. Functionally, with S4 and S5 plays an important role in translational accuracy. Located at the interface of the 30S and 50S subunits. The chain is Small ribosomal subunit protein uS12c (rps12) from Chaetosphaeridium globosum (Charophycean green alga).